The primary structure comprises 187 residues: CRISPR system Cmr subunit Cmr1-2 (187 aa).

The protein belongs to the CRISPR system Cmr1 family. As to quaternary structure, part of the type III-B Cmr ribonucleoprotein (RNP) complex. This is an elongated RNP with Cmr2 and Cmr3 as the base, with Cmr4 and Cmr5 forming a helical core along the mature crRNA (39 or 45 nt in length), while the complex is capped by Cmr6 and Cmr1. The 5' end of the crRNA is bound to Cmr2 and Cmr3, while Cmr6 and a Cmr1 subunit (Cmr1-1 or Cmr1-2) cap the 3' end of the crRNA. The target RNA lies antiparallel to the crRNA, with its 5' end near Cmr1 and Cmr6 and its 3' end near Cmr2 and Cmr3; major target cleavage occurs nears the junction of Cmr1/Cmr6 and Cmr4/Cmr, with minor cleavage occurring at 6 nt intervals which coincide with the proposed spacing of Cmr4 subunits.

It localises to the cytoplasm. CRISPR (clustered regularly interspaced short palindromic repeat), is an adaptive immune system that provides protection against mobile genetic elements (viruses, transposable elements and conjugative plasmids). CRISPR clusters contain sequences complementary to antecedent mobile elements and target invading nucleic acids. CRISPR clusters are transcribed and processed into CRISPR RNA (crRNA), formerly called psiRNA (prokaryotic silencing) in this organism. Part of the Cmr ribonucleoprotein complex which has divalent cation-dependent endoribonuclease activity specific for ssRNA complementary to the crRNA (target RNA), generating 5' hydroxy- and 3' phosphate or 2'-3' cyclic phosphate termini. Cmr4 is probably the subunit that cleaves target RNA. Cmr complex does not cleave ssDNA complementary to the crRNA. Cleavage of invading RNA is guided by the crRNA; substrate cleavage occurs a fixed distance (14 nt) from the 3' end of the crRNA. In vitro reconstitution shows Cmr1-2 and Cmr5 are not absolutely necessary for target cleavage. This Pyrococcus furiosus (strain ATCC 43587 / DSM 3638 / JCM 8422 / Vc1) protein is CRISPR system Cmr subunit Cmr1-2.